A 249-amino-acid chain; its full sequence is Zinc finger protein mnm-2 (249 aa).

The disordered stretch occupies residues 20-65 (PKEELETEEEDEEEDEEEELSSSEVTSENDMETESASSSASSVGQP). Over residues 24-52 (LETEEEDEEEDEEEELSSSEVTSENDMET) the composition is skewed to acidic residues. 3 C2H2-type zinc fingers span residues 168–190 (YRCDVCDKTFSRSNTLITHKRIH), 196–218 (FKCEHCGRAFRQPGNLTRHRLTH), and 224–246 (YVCGLCDKAFNRASNLHTHMRTH).

In larva and adult, expressed in the M3 pharyngeal motor neurons, extrapharyngeal neurons in the head, the PQR tail neurons, rectal cells, vulva cells, the spermetheca-uterine valve, body wall muscle cells and neurons of the ventral nerve cord. In the embryo, expressed in pharyngeal cells, extrapharyngeal head neurons and within the tail. Expressed in body wall muscle cells during late embryonic stages. Expressed in the mother cells of the M2 and M3 pharyngeal motor neurons precursor cells at the embryonic bean stage and subsequently in the M2 and M3 cells as they are born. Expression is sustained only in the two M3 cells up to at least the 5-day-old adult. In contrast, expression gradually declines in the M2 cells beginning from the time of their birth, and is completely undetectable by the time of hatching.

The protein localises to the nucleus. In terms of biological role, required in the M3 pharyngeal motor neuron to guide the growth cone of the sister M2 motor neuron during axon development. This chain is Zinc finger protein mnm-2, found in Caenorhabditis elegans.